The chain runs to 218 residues: MKQPAPVYQRIAGHQWRHIWLSGDIHGCLEQLRRKLWHCRFDPWRDLLISVGDVIDRGPQSLRCLQLLEQHWVCAVRGNHEQMAMDALASQQMSLWLMNGGDWFIALADNQQKQAKTALEKCQHLPFILEVHSRTGKHVIAHADYPDDVYEWQKDVDLHQVLWSRSRLGERQKGQGITGADHFWFGHTPLRHRVDIGNLHYIDTGAVFGGELTLVQLQ.

The Mn(2+) site is built by Asp-24, His-26, Asp-53, and Asn-79. Residue His-80 is the Proton donor of the active site. Mn(2+) is bound at residue His-187.

The protein belongs to the PPP phosphatase family. PP-1 subfamily. Requires Mn(2+) as cofactor.

The catalysed reaction is O-phospho-L-seryl-[protein] + H2O = L-seryl-[protein] + phosphate. The enzyme catalyses O-phospho-L-threonyl-[protein] + H2O = L-threonyl-[protein] + phosphate. Plays a key role in signaling protein misfolding via the CpxR/CPXA transducing system. It also modulates the phosphorylated status of many phosphoproteins in E.coli, some of which acting as major chaperones. Has been shown, in vitro, to act on Ser, Thr and Tyr-phosphorylated substrates. This Escherichia coli (strain K12) protein is Serine/threonine-protein phosphatase 1 (pphA).